Consider the following 751-residue polypeptide: Photosystem I P700 chlorophyll a apoprotein A1 (751 aa).

Helical transmembrane passes span 73–96, 159–182, 198–222, 294–312, 349–372, 388–414, 436–458, and 533–551; these read VFSA…FHGA, LYTT…FHYH, LNHH…HVSL, TVHH…GHQY, WHAQ…HHMY, LSLF…IFMV, AMIS…LYIH, and FMVH…LILL. 2 residues coordinate [4Fe-4S] cluster: Cys-575 and Cys-584. A run of 2 helical transmembrane segments spans residues 591-612 and 665-687; these read HVFL…HFSW and LSAY…MFLF. His-676 provides a ligand contact to chlorophyll a'. 2 residues coordinate chlorophyll a: Met-684 and Tyr-692. Residue Trp-693 participates in phylloquinone binding. A helical membrane pass occupies residues 725–745; it reads AVGVAHYLLGGIATTWSFFLA.

This sequence belongs to the PsaA/PsaB family. The PsaA/B heterodimer binds the P700 chlorophyll special pair and subsequent electron acceptors. PSI consists of a core antenna complex that captures photons, and an electron transfer chain that converts photonic excitation into a charge separation. The eukaryotic PSI reaction center is composed of at least 11 subunits. P700 is a chlorophyll a/chlorophyll a' dimer, A0 is one or more chlorophyll a, A1 is one or both phylloquinones and FX is a shared 4Fe-4S iron-sulfur center. serves as cofactor.

It localises to the plastid. Its subcellular location is the chloroplast thylakoid membrane. It carries out the reaction reduced [plastocyanin] + hnu + oxidized [2Fe-2S]-[ferredoxin] = oxidized [plastocyanin] + reduced [2Fe-2S]-[ferredoxin]. PsaA and PsaB bind P700, the primary electron donor of photosystem I (PSI), as well as the electron acceptors A0, A1 and FX. PSI is a plastocyanin/cytochrome c6-ferredoxin oxidoreductase, converting photonic excitation into a charge separation, which transfers an electron from the donor P700 chlorophyll pair to the spectroscopically characterized acceptors A0, A1, FX, FA and FB in turn. Oxidized P700 is reduced on the lumenal side of the thylakoid membrane by plastocyanin or cytochrome c6. The sequence is that of Photosystem I P700 chlorophyll a apoprotein A1 from Chlorella vulgaris (Green alga).